We begin with the raw amino-acid sequence, 57 residues long: Large ribosomal subunit protein bL32 (57 aa).

Residues 1–19 (MAVPKRRMSRANTRSRRAQ) are compositionally biased toward basic residues. The tract at residues 1–20 (MAVPKRRMSRANTRSRRAQW) is disordered.

This sequence belongs to the bacterial ribosomal protein bL32 family.

This Mycolicibacterium smegmatis (strain ATCC 700084 / mc(2)155) (Mycobacterium smegmatis) protein is Large ribosomal subunit protein bL32.